We begin with the raw amino-acid sequence, 280 residues long: MNSYLLAFKSGFGFLSTIPVGITMEGIDELMKKIFFYPVVGAVLGLLIGIVAYAGQLVFPGPVLAALIMGFVYYITGFNHLDGVTDMGDGFMAHGSLEKKVKALKDTTLGTGGVAFGILVLLAFYGSIRSVQEEGIAAFGSNLPFLMFASMFIAEVSAKQSMLTIAAFGKPLPRLKEQTYPGLGEMTINGATRKNFLIGFIFGAVVCCLPFGLIGLIPYLAACISALVLLNRSYAHFGGLNGDGIGTANEIGRITALIVIAVTLKLSLNGYLGGLEWTLL.

Helical transmembrane passes span 4–24 (YLLA…GITM), 34–54 (IFFY…VAYA), 58–78 (VFPG…ITGF), 108–128 (TLGT…YGSI), 136–156 (IAAF…IAEV), 197–217 (LIGF…IGLI), and 254–274 (ITAL…YLGG).

The protein belongs to the CobS family. Requires Mg(2+) as cofactor.

It is found in the cell membrane. The enzyme catalyses alpha-ribazole + adenosylcob(III)inamide-GDP = adenosylcob(III)alamin + GMP + H(+). The catalysed reaction is alpha-ribazole 5'-phosphate + adenosylcob(III)inamide-GDP = adenosylcob(III)alamin 5'-phosphate + GMP + H(+). It functions in the pathway cofactor biosynthesis; adenosylcobalamin biosynthesis; adenosylcobalamin from cob(II)yrinate a,c-diamide: step 7/7. Its function is as follows. Joins adenosylcobinamide-GDP and alpha-ribazole to generate adenosylcobalamin (Ado-cobalamin). Also synthesizes adenosylcobalamin 5'-phosphate from adenosylcobinamide-GDP and alpha-ribazole 5'-phosphate. The protein is Adenosylcobinamide-GDP ribazoletransferase of Methanosarcina mazei (strain ATCC BAA-159 / DSM 3647 / Goe1 / Go1 / JCM 11833 / OCM 88) (Methanosarcina frisia).